We begin with the raw amino-acid sequence, 313 residues long: Lactamase-like protein ptaB (313 aa).

Zn(2+)-binding residues include His-104, His-106, Asp-108, and His-109. Residue Asp-108 is the Proton donor/acceptor of the active site.

The protein belongs to the metallo-beta-lactamase superfamily. Zn(2+) is required as a cofactor.

The enzyme catalyses atrochrysone carboxyl-[ACP] + H2O = atrochrysone carboxylate + holo-[ACP] + H(+). The protein operates within secondary metabolite biosynthesis. Its function is as follows. Lactamase-like protein; part of the gene cluster that mediates the biosynthesis of pestheic acid, a diphenyl ether which is a biosynthetic precursor of the unique chloropupukeananes. The biosynthesis initiates from condensation of acetate and malonate units catalyzed by the non-reducing PKS ptaA. As the ptaA protein is TE/CLC domain-deficient, hydrolysis and Claisen cyclization of the polyketide could be catalyzed by ptaB containing a beta-lactamase domain. The ptaB protein might hydrolyze the thioester bond between the ACP of ptaA and the intermediate to release atrochrysone carboxylic acid, which is spontaneously dehydrated to form endocrocin anthrone. Endocrocin anthrone is then converted to endocrocin, catalyzed by the anthrone oxygenase ptaC. Spontaneous decarboxylation of endocrocin occurs to generate emodin. An O-methyltransferase (ptaH or ptaI) could methylate emodin to form physcion. PtaJ could then catalyze the oxidative cleavage of physcion, and rotation of the intermediate could then afford desmethylisosulochrin. PtaF, a putative NADH-dependent oxidoreductase, might also participate in the oxidative cleavage step. Desmethylisosulochrin is then transformed by another O-methyltransferase (ptaH or ptaI) to form isosulochrin. Chlorination of isosulochrin by ptaM in the cyclohexadienone B ring then produces chloroisosulochrin. PtaE is responsible for the oxidative coupling reactions of both benzophenones isosulochrin and chloroisosulochrin to RES-1214-1 and pestheic acid respectively, regardless of chlorination. This Pestalotiopsis fici (strain W106-1 / CGMCC3.15140) protein is Lactamase-like protein ptaB.